Here is a 323-residue protein sequence, read N- to C-terminus: DNA primase small subunit PriS (323 aa).

Catalysis depends on residues Asp-97, Asp-99, and Asp-274.

Belongs to the eukaryotic-type primase small subunit family. Heterodimer of a small subunit (PriS) and a large subunit (PriL). Mg(2+) serves as cofactor. It depends on Mn(2+) as a cofactor.

Functionally, catalytic subunit of DNA primase, an RNA polymerase that catalyzes the synthesis of short RNA molecules used as primers for DNA polymerase during DNA replication. The small subunit contains the primase catalytic core and has DNA synthesis activity on its own. Binding to the large subunit stabilizes and modulates the activity, increasing the rate of DNA synthesis while decreasing the length of the DNA fragments, and conferring RNA synthesis capability. The DNA polymerase activity may enable DNA primase to also catalyze primer extension after primer synthesis. May also play a role in DNA repair. The protein is DNA primase small subunit PriS of Methanothermobacter thermautotrophicus (strain ATCC 29096 / DSM 1053 / JCM 10044 / NBRC 100330 / Delta H) (Methanobacterium thermoautotrophicum).